We begin with the raw amino-acid sequence, 175 residues long: Peptide deformylase (175 aa).

Residues Cys-94 and His-136 each coordinate Fe cation. Glu-137 is an active-site residue. His-140 is a Fe cation binding site.

Belongs to the polypeptide deformylase family. Fe(2+) serves as cofactor.

It carries out the reaction N-terminal N-formyl-L-methionyl-[peptide] + H2O = N-terminal L-methionyl-[peptide] + formate. In terms of biological role, removes the formyl group from the N-terminal Met of newly synthesized proteins. Requires at least a dipeptide for an efficient rate of reaction. N-terminal L-methionine is a prerequisite for activity but the enzyme has broad specificity at other positions. In Brucella suis biovar 1 (strain 1330), this protein is Peptide deformylase.